A 309-amino-acid polypeptide reads, in one-letter code: Taste receptor type 2 member 31 (309 aa).

The Extracellular segment spans residues 1 to 2; sequence MI. The helical transmembrane segment at 3 to 23 threads the bilayer; that stretch reads TFLPIIFSILVVVTFVIGNFA. The Cytoplasmic segment spans residues 24-55; it reads NGFIALVNSTEWVKRQKISFADQILTALAVSR. The chain crosses the membrane as a helical span at residues 56–76; it reads VGLLWVLLLNWYATVLNPAFY. Residues 77-100 lie on the Extracellular side of the membrane; the sequence is SVEVRTTTYNVWAVTNHFSNWLAT. The chain crosses the membrane as a helical span at residues 101-121; sequence SLSIFYLLKIANFSNLIFLHL. Residues 122–126 are Cytoplasmic-facing; sequence KRRVK. Residues 127-147 form a helical membrane-spanning segment; the sequence is NVILVMLLGPLLILACHLFMV. At 148-181 the chain is on the extracellular side; sequence NMNEIVRTKEYEENMTWKYILRNAIYHPGMTVTT. Residue N161 is glycosylated (N-linked (GlcNAc...) asparagine). The chain crosses the membrane as a helical span at residues 182 to 202; that stretch reads LQNLVPFTLTLISFLLLICSL. Residues 203–229 are Cytoplasmic-facing; sequence CKHLKKMQLHGKGPQDPSTKVHIKALQ. The helical transmembrane segment at 230-250 threads the bilayer; that stretch reads IVISFLLLCVIYFVSVIISIW. At 251-259 the chain is on the extracellular side; it reads SFESLGNKP. A helical membrane pass occupies residues 260 to 280; that stretch reads VFMFCQAIRFSYPSAHPFIVI. Residues 281-309 are Cytoplasmic-facing; the sequence is WGNKKLKQTFLSVLWNVRYWVKGQKPSSL.

Belongs to the G-protein coupled receptor T2R family.

The protein resides in the membrane. In terms of biological role, receptor that may play a role in the perception of bitterness and is gustducin-linked. May play a role in sensing the chemical composition of the gastrointestinal content. The activity of this receptor may stimulate alpha gustducin, mediate PLC-beta-2 activation and lead to the gating of TRPM5. This chain is Taste receptor type 2 member 31 (TAS2R31), found in Papio hamadryas (Hamadryas baboon).